The primary structure comprises 757 residues: POU domain, class 2, transcription factor 1 (757 aa).

Disordered regions lie at residues 1-43 (MKLH…QTNG), 271-295 (AATP…SLEE), 375-398 (SLSN…RRKK), and 532-574 (VSSV…TSPL). Composition is skewed to polar residues over residues 19 to 43 (RMNN…QTNG) and 275 to 285 (VQQLPQSQTTP). Positions 294–368 (EEPSDLEELE…LLEKWLNDAE (75 aa)) constitute a POU-specific domain. Residues 395–454 (RRKKRTSIETNIRVALEKSFLENQKPTSEEITMIADQLNMEKEVIRVWFCNRRQKEKRIN) constitute a DNA-binding region (homeobox).

It belongs to the POU transcription factor family. Class-2 subfamily.

It is found in the cytoplasm. Its subcellular location is the nucleus. In terms of biological role, transcription factor that binds to the octamer motif (5'-ATTTGCAT-3') and activates the promoters of the genes for some small nuclear RNAs (snRNA) and histone H2B. Acts downstream of Notch signaling during radial glia formation. Regulates apoptosis, possibly via an FGF-signaling pathway. The polypeptide is POU domain, class 2, transcription factor 1 (Xenopus tropicalis (Western clawed frog)).